The primary structure comprises 186 residues: Ribosome-recycling factor (186 aa).

This sequence belongs to the RRF family.

It is found in the cytoplasm. Functionally, responsible for the release of ribosomes from messenger RNA at the termination of protein biosynthesis. May increase the efficiency of translation by recycling ribosomes from one round of translation to another. The sequence is that of Ribosome-recycling factor from Phocaeicola vulgatus (strain ATCC 8482 / DSM 1447 / JCM 5826 / CCUG 4940 / NBRC 14291 / NCTC 11154) (Bacteroides vulgatus).